The sequence spans 281 residues: Ribosomal RNA small subunit methyltransferase A (281 aa).

S-adenosyl-L-methionine contacts are provided by N36, L38, G63, E84, D109, and N127.

The protein belongs to the class I-like SAM-binding methyltransferase superfamily. rRNA adenine N(6)-methyltransferase family. RsmA subfamily.

It localises to the cytoplasm. The enzyme catalyses adenosine(1518)/adenosine(1519) in 16S rRNA + 4 S-adenosyl-L-methionine = N(6)-dimethyladenosine(1518)/N(6)-dimethyladenosine(1519) in 16S rRNA + 4 S-adenosyl-L-homocysteine + 4 H(+). In terms of biological role, specifically dimethylates two adjacent adenosines (A1518 and A1519) in the loop of a conserved hairpin near the 3'-end of 16S rRNA in the 30S particle. May play a critical role in biogenesis of 30S subunits. This Borreliella burgdorferi (strain ATCC 35210 / DSM 4680 / CIP 102532 / B31) (Borrelia burgdorferi) protein is Ribosomal RNA small subunit methyltransferase A.